A 127-amino-acid polypeptide reads, in one-letter code: Large ribosomal subunit protein eL22x (127 aa).

This sequence belongs to the eukaryotic ribosomal protein eL22 family.

This chain is Large ribosomal subunit protein eL22x (RPL22A), found in Arabidopsis thaliana (Mouse-ear cress).